Reading from the N-terminus, the 394-residue chain is Elongation factor Tu (394 aa).

Residues 10–204 (KPHVNVGTIG…ALDSYIPEPE (195 aa)) enclose the tr-type G domain. The segment at 19 to 26 (GHVDHGKT) is G1. Residue 19–26 (GHVDHGKT) coordinates GTP. Residue T26 participates in Mg(2+) binding. A G2 region spans residues 60–64 (GITIN). The G3 stretch occupies residues 81–84 (DCPG). Residues 81 to 85 (DCPGH) and 136 to 139 (NKCD) contribute to the GTP site. The tract at residues 136–139 (NKCD) is G4. The G5 stretch occupies residues 174 to 176 (SAL).

This sequence belongs to the TRAFAC class translation factor GTPase superfamily. Classic translation factor GTPase family. EF-Tu/EF-1A subfamily. In terms of assembly, monomer.

The protein resides in the cytoplasm. The enzyme catalyses GTP + H2O = GDP + phosphate + H(+). In terms of biological role, GTP hydrolase that promotes the GTP-dependent binding of aminoacyl-tRNA to the A-site of ribosomes during protein biosynthesis. The protein is Elongation factor Tu of Sodalis glossinidius (strain morsitans).